Consider the following 325-residue polypeptide: Clavaminate synthase 2 (325 aa).

Fe cation-binding residues include His145, Glu147, and His280. Position 294 (Arg294) interacts with 2-oxoglutarate.

It belongs to the clavaminate synthase family. Requires Fe(2+) as cofactor.

The catalysed reaction is deoxyamidinoproclavaminate + 2-oxoglutarate + O2 = amidinoproclavaminate + succinate + CO2. It carries out the reaction proclavaminate + 2-oxoglutarate + O2 = dihydroclavaminate + succinate + CO2 + H2O. The enzyme catalyses dihydroclavaminate + 2-oxoglutarate + O2 = clavaminate + succinate + CO2 + H2O. Its pathway is antibiotic biosynthesis; clavulanate biosynthesis; clavulanate from D-glyceraldehyde 3-phosphate and L-arginine: step 3/8. It participates in antibiotic biosynthesis; clavulanate biosynthesis; clavulanate from D-glyceraldehyde 3-phosphate and L-arginine: step 5/8. The protein operates within antibiotic biosynthesis; clavulanate biosynthesis; clavulanate from D-glyceraldehyde 3-phosphate and L-arginine: step 6/8. This chain is Clavaminate synthase 2 (cs2), found in Streptomyces clavuligerus.